Reading from the N-terminus, the 252-residue chain is Isoprenyl transferase (252 aa).

The active site involves Asp28. Asp28 is a Mg(2+) binding site. Residues 29 to 32, Trp33, Arg41, His45, and 73 to 75 contribute to the substrate site; these read GNGR and STE. Asn76 serves as the catalytic Proton acceptor. Substrate contacts are provided by residues Trp77, Arg79, Arg200, and 206–208; that span reads RLS. Glu219 is a binding site for Mg(2+).

This sequence belongs to the UPP synthase family. As to quaternary structure, homodimer. Requires Mg(2+) as cofactor.

Catalyzes the condensation of isopentenyl diphosphate (IPP) with allylic pyrophosphates generating different type of terpenoids. This Streptococcus pneumoniae serotype 4 (strain ATCC BAA-334 / TIGR4) protein is Isoprenyl transferase.